We begin with the raw amino-acid sequence, 241 residues long: Probable cobalt-factor III C(17)-methyltransferase (241 aa).

This sequence belongs to the precorrin methyltransferase family.

The enzyme catalyses Co(II)-factor III + S-adenosyl-L-methionine + H(+) = Co(II)-factor IV + S-adenosyl-L-homocysteine. The protein operates within cofactor biosynthesis; adenosylcobalamin biosynthesis; cob(II)yrinate a,c-diamide from sirohydrochlorin (anaerobic route): step 3/10. In terms of biological role, methyltransferase that likely catalyzes the ring contraction and methylation of C-17 in cobalt-factor III to form cobalt-factor IV. May also convert cobalt-precorrin-3 to cobalt-precorrin-4. In Salmonella typhimurium (strain LT2 / SGSC1412 / ATCC 700720), this protein is Probable cobalt-factor III C(17)-methyltransferase (cbiH).